Here is a 201-residue protein sequence, read N- to C-terminus: dTTP/UTP pyrophosphatase (201 aa).

The active-site Proton acceptor is aspartate 80.

It belongs to the Maf family. YhdE subfamily. A divalent metal cation serves as cofactor.

The protein resides in the cytoplasm. The enzyme catalyses dTTP + H2O = dTMP + diphosphate + H(+). It carries out the reaction UTP + H2O = UMP + diphosphate + H(+). Nucleoside triphosphate pyrophosphatase that hydrolyzes dTTP and UTP. May have a dual role in cell division arrest and in preventing the incorporation of modified nucleotides into cellular nucleic acids. In Novosphingobium aromaticivorans (strain ATCC 700278 / DSM 12444 / CCUG 56034 / CIP 105152 / NBRC 16084 / F199), this protein is dTTP/UTP pyrophosphatase.